The primary structure comprises 54 residues: Large ribosomal subunit protein bL32c (54 aa).

The protein belongs to the bacterial ribosomal protein bL32 family.

The protein resides in the plastid. The protein localises to the chloroplast. This chain is Large ribosomal subunit protein bL32c, found in Panax ginseng (Korean ginseng).